We begin with the raw amino-acid sequence, 234 residues long: Probable ascorbate-specific transmembrane electron transporter 1 (234 aa).

Topologically, residues 1–9 (MGLGVRAAP) are cytoplasmic. Residues 10 to 30 (FTYVAHALAVAAATMVLVWCI) traverse the membrane as a helical segment. Residues 13–217 (VAHALAVAAA…FGASVVVAAV (205 aa)) enclose the Cytochrome b561 domain. Residues 31 to 48 (HFRGGLAFEATNKNLIFN) are Extracellular-facing. The chain crosses the membrane as a helical span at residues 49–69 (VHPVLMLIGYIILGSEAIMVY). Residue His50 coordinates heme b. 65 to 73 (AIMVYKVLP) is a binding site for L-ascorbate. Residues 70–82 (KVLPTWKHDTTKL) are Cytoplasmic-facing. The chain crosses the membrane as a helical span at residues 83–103 (IHLILHAIALVFGAVGIYCAF). Heme b contacts are provided by His84 and His118. Residues 104–121 (KFHNESGIANLYSLHSWL) lie on the Extracellular side of the membrane. 114 to 123 (LYSLHSWLGI) is a monodehydro-L-ascorbate radical binding site. Residues 122-142 (GIGTICLYGIQWIFGFVAFFF) traverse the membrane as a helical segment. Residues 143–151 (PRASPSVRK) lie on the Cytoplasmic side of the membrane. A helical transmembrane segment spans residues 152–172 (GVLPWHILFGLFVYILALATA). His157 is a heme b binding site. The Extracellular segment spans residues 173 to 194 (ELGFLEKLTFLQSSGLDKYGAE). Residues 195-215 (AFLVNFTALIVVLFGASVVVA) traverse the membrane as a helical segment. The Cytoplasmic segment spans residues 216–234 (AVSPARVEEPHEYAPIPES).

Heme b serves as cofactor.

Its subcellular location is the membrane. In terms of biological role, two-heme-containing cytochrome. Catalyzes ascorbate-dependent trans-membrane electron transfer by utilizing a concerted H(+)/e(-) transfer mechanism. In Oryza sativa subsp. japonica (Rice), this protein is Probable ascorbate-specific transmembrane electron transporter 1.